Here is a 128-residue protein sequence, read N- to C-terminus: Cytochrome c' (128 aa).

Heme c is bound by residues Q13, Q17, E69, T70, C118, C121, and H122.

Post-translationally, binds 1 heme c group covalently per subunit.

Functionally, cytochrome c' is the most widely occurring bacterial c-type cytochrome. Cytochromes c' are high-spin proteins and the heme has no sixth ligand. Their exact function is not known. The sequence is that of Cytochrome c' from Magnetospirillum fulvum (Rhodospirillum fulvum).